A 134-amino-acid polypeptide reads, in one-letter code: Transmembrane protein 100 (134 aa).

2 helical membrane-spanning segments follow: residues 56-76 (CIIPFAVVVFIAGIVVTAVAY) and 84-104 (IISIFGLVVLSSGLFLLASSA). The residue at position 121 (serine 121) is a Phosphoserine.

In terms of assembly, interacts (via C-terminus) with TRPA1 and TRPV1. Interacts with TASOR. As to expression, expressed in neurons of the myenteric and submucosal plexuses in the gastric body, jejunum and proximal colon. Expressed in arterial endothelial cells and neurons of the central nervous system and peripheral nervous system. Expressed in umbilical artery endothelial cells (at protein level).

Its subcellular location is the cell membrane. The protein localises to the membrane. The protein resides in the perikaryon. It is found in the cytoplasm. It localises to the perinuclear region. Its subcellular location is the endoplasmic reticulum. In terms of biological role, plays a role during embryonic arterial endothelium differentiation and vascular morphogenesis through the ACVRL1 receptor-dependent signaling pathway upon stimulation by bone morphogenetic proteins, such as GDF2/BMP9 and BMP10. Involved in the regulation of nociception, acting as a modulator of the interaction between TRPA1 and TRPV1, two molecular sensors and mediators of pain signals in dorsal root ganglia (DRG) neurons. Mechanistically, it weakens their interaction, thereby releasing the inhibition of TRPA1 by TRPV1 and increasing the single-channel open probability of the TRPA1-TRPV1 complex. This chain is Transmembrane protein 100 (TMEM100), found in Homo sapiens (Human).